Consider the following 225-residue polypeptide: Helicostatins (225 aa).

The first 18 residues, 1–18 (MLYSSLPVCFLVLGAALC), serve as a signal peptide directing secretion. The propeptide occupies 19–48 (APERMQNEAEPHDLQPHEAEPHSDHVAPLA). L58, L79, and L90 each carry leucine amide. Positions 94 to 127 (SVDEDQSNDEQQLTTSDLDQAALAELFDQYDDAE) are excised as a propeptide. A Leucine amide modification is found at L137. Positions 141–149 (FADDETSEE) are excised as a propeptide. Leucine amide occurs at positions 159, 170, 181, 192, and 206. The disordered stretch occupies residues 205-225 (GLGKRSGDDVSADDSDNYFDV). A propeptide spanning residues 210–225 (SGDDVSADDSDNYFDV) is cleaved from the precursor. A compositionally biased stretch (acidic residues) spans 214-225 (VSADDSDNYFDV).

This sequence belongs to the allatostatin family. In terms of tissue distribution, highly expressed in the CNS and gut of larvae. Also expressed in the cells of the larval brain and ventral nerve cord and in endocrine cells of the midgut.

It localises to the secreted. May act as a neurotransmitter or neuromodulator. This Helicoverpa armigera (Cotton bollworm) protein is Helicostatins.